A 158-amino-acid chain; its full sequence is Glycine/sarcosine/betaine reductase complex component A1 (158 aa).

Sec-46 is an active-site residue. Position 46 (Sec-46) is a non-standard amino acid, selenocysteine.

Belongs to the GrdA family. In terms of assembly, monomer. Component of the glycine, sarcosine and betaine reductase complexes, together with components B and C.

The enzyme catalyses acetyl phosphate + [thioredoxin]-disulfide + NH4(+) + H2O = [thioredoxin]-dithiol + glycine + phosphate + H(+). It catalyses the reaction acetyl phosphate + methylamine + [thioredoxin]-disulfide + H2O = sarcosine + [thioredoxin]-dithiol + phosphate + H(+). The catalysed reaction is acetyl phosphate + trimethylamine + [thioredoxin]-disulfide + H2O = glycine betaine + [thioredoxin]-dithiol + phosphate + H(+). Functionally, in the first step of glycine, betaine and sarcosine reductases, the substrate is bound to component PB via a Schiff base intermediate. Then the PB-activated substrate is nucleophilically attacked by the selenol anion of component PA to transform it to a carboxymethylated selenoether and the respective amine. By action of component PC, acetyl phosphate is formed, leaving component PA in its oxidized state. Finally component PA becomes reduced by the thioredoxin system to start a new catalytic cycle of reductive deamination. The chain is Glycine/sarcosine/betaine reductase complex component A1 (grdA1) from Photobacterium profundum (strain SS9).